The primary structure comprises 185 residues: Ribosome-recycling factor (185 aa).

The protein belongs to the RRF family.

It is found in the cytoplasm. Functionally, responsible for the release of ribosomes from messenger RNA at the termination of protein biosynthesis. May increase the efficiency of translation by recycling ribosomes from one round of translation to another. This chain is Ribosome-recycling factor, found in Corynebacterium aurimucosum (strain ATCC 700975 / DSM 44827 / CIP 107346 / CN-1) (Corynebacterium nigricans).